Here is a 95-residue protein sequence, read N- to C-terminus: MSIKPLHDRVVVKPIEADEISAGGIVIPDSAKEKSTKGEVVAVGPGKPLDNGSVRAPSLKVGDKVIYGQYAGSSYKSEGVEYKVLREDDVLAVIG.

This sequence belongs to the GroES chaperonin family. Heptamer of 7 subunits arranged in a ring. Interacts with the chaperonin GroEL.

Its subcellular location is the cytoplasm. Its function is as follows. Together with the chaperonin GroEL, plays an essential role in assisting protein folding. The GroEL-GroES system forms a nano-cage that allows encapsulation of the non-native substrate proteins and provides a physical environment optimized to promote and accelerate protein folding. GroES binds to the apical surface of the GroEL ring, thereby capping the opening of the GroEL channel. The protein is Co-chaperonin GroES of Stenotrophomonas maltophilia (strain R551-3).